Reading from the N-terminus, the 450-residue chain is Phosphoglucosamine mutase (450 aa).

The active-site Phosphoserine intermediate is Ser-101. Positions 101, 240, 242, and 244 each coordinate Mg(2+). Ser-101 is subject to Phosphoserine.

Belongs to the phosphohexose mutase family. The cofactor is Mg(2+). Activated by phosphorylation.

The catalysed reaction is alpha-D-glucosamine 1-phosphate = D-glucosamine 6-phosphate. Its function is as follows. Catalyzes the conversion of glucosamine-6-phosphate to glucosamine-1-phosphate. The sequence is that of Phosphoglucosamine mutase from Streptococcus gordonii (strain Challis / ATCC 35105 / BCRC 15272 / CH1 / DL1 / V288).